The primary structure comprises 2434 residues: ATP-binding cassette sub-family A member 2 (2434 aa).

An N-linked (GlcNAc...) asparagine glycan is attached at N14. A run of 2 helical transmembrane segments spans residues 22–42 and 54–74; these read PWVL…LLGL and AFYT…QSLC. Residues N89, N168, and N173 are each glycosylated (N-linked (GlcNAc...) asparagine). Q271 carries the N5-methylglutamine modification. 13 N-linked (GlcNAc...) asparagine glycosylation sites follow: N305, N368, N379, N420, N432, N476, N484, N494, N530, N549, N590, N600, and N628. Over residues 354–369 the composition is skewed to low complexity; sequence RAPAPQAGSPSGPANS. Residues 354–396 form a disordered region; that stretch reads RAPAPQAGSPSGPANSTGVGANTGPNTTVEEGTQSPVTPASPD. Residues 370–396 show a composition bias toward polar residues; the sequence is TGVGANTGPNTTVEEGTQSPVTPASPD. The next 6 membrane-spanning stretches (helical) occupy residues 699–719, 750–770, 782–802, 813–833, 857–877, and 893–913; these read FLFV…VYSV, VAWF…LTAI, VLII…FCFL, ASAC…YVAI, AFGL…GIQW, and LLAV…TWYI. Residues 990–1221 enclose the ABC transporter 1 domain; the sequence is VCVDKLTKVY…YGDGYRLTLV (232 aa). 1024–1031 lines the ATP pocket; the sequence is GHNGAGKT. A disordered region spans residues 1225 to 1246; the sequence is AEPGTSQEPGMASSPSGRPQLS. A compositionally biased stretch (polar residues) spans 1228–1246; the sequence is GTSQEPGMASSPSGRPQLS. S1238 carries the phosphoserine modification. N1247 carries N-linked (GlcNAc...) asparagine glycosylation. A phosphoserine mark is found at S1327 and S1331. The helical transmembrane segment at 1461 to 1481 threads the bilayer; the sequence is ILLPAFFVCVAMTVALSVPEI. N1496, N1549, and N1557 each carry an N-linked (GlcNAc...) asparagine glycan. The tract at residues 1587 to 1606 is disordered; the sequence is NFVPPPPSPAPSDSPLSPDE. The span at 1589–1598 shows a compositional bias: pro residues; it reads VPPPPSPAPS. N1613, N1678, and N1776 each carry an N-linked (GlcNAc...) asparagine glycan. A run of 5 helical transmembrane segments spans residues 1793-1813, 1842-1862, 1873-1893, 1906-1926, and 1992-2012; these read VVIA…FVVF, VWDM…LFVF, FPAV…IMYP, VFLI…TFLL, and GLVA…MCQY. Residues 2051–2286 enclose the ABC transporter 2 domain; the sequence is VKIENLTKVY…FGDGYMITVR (236 aa). A glycan (N-linked (GlcNAc...) asparagine) is linked at N2055. 2088-2095 is an ATP binding site; it reads GVNGAGKT. A Phosphothreonine modification is found at T2411.

Belongs to the ABC transporter superfamily. ABCA family. In terms of processing, N-glycosylated. Methylated at Gln-271 by N6AMT1. Expressed at high levels in brain, at moderate levels in heart, kidney and lung, and at low levels in skeletal muscle, stomach, spleen, colon and pancreas. Not detected in the liver or small intestine. In brain, highly expressed in white matter and detected in oligodendrocytes. Expressed in cerebellum as well as the anterior commissure. Expressed mainly in the white matter but is also scattered in gray matter throughout the whole brain. Expressed in myelinating cells of both ventral and dorsal restricted regions in newborn spinal cord. Expressed in non-myelin-forming as well as in myelin-forming Schwann cells in the sciatic nerve.

The protein resides in the endosome membrane. It localises to the lysosome membrane. Probable transporter, its natural substrate has not been found yet. May have a role in macrophage lipid metabolism and neural development. May play a role in myelination, perhaps as a transporter for certain kinds of myelin chemical components. May play an important role in gamma-secretase processing of APP and thus in amyloid-beta peptide generation. Regulates esterification of plasma membrane cholesterol by modulation of sphingolipid metabolism. In terms of biological role, probable lipid transporter that modulates cholesterol sequestration in the late endosome/lysosome by regulating the intracellular sphingolipid metabolism, in turn participates in cholesterol homeostasis. May alter the transbilayer distribution of ceramide in the intraluminal membrane lipid bilayer, favoring its retention in the outer leaflet that results in increased acid ceramidase activity in the late endosome/lysosome, facilitating ceramide deacylation to sphingosine leading to the sequestration of free cholesterol in lysosomes. In addition regulates amyloid-beta production either by activating a signaling pathway that regulates amyloid precursor protein transcription through the modulation of sphingolipid metabolism or through its role in gamma-secretase processing of APP. May play a role in myelin formation. The protein is ATP-binding cassette sub-family A member 2 of Rattus norvegicus (Rat).